We begin with the raw amino-acid sequence, 261 residues long: Tryptophan synthase alpha chain (261 aa).

Residues Glu-47 and Asp-58 each act as proton acceptor in the active site.

This sequence belongs to the TrpA family. As to quaternary structure, tetramer of two alpha and two beta chains.

The enzyme catalyses (1S,2R)-1-C-(indol-3-yl)glycerol 3-phosphate + L-serine = D-glyceraldehyde 3-phosphate + L-tryptophan + H2O. It functions in the pathway amino-acid biosynthesis; L-tryptophan biosynthesis; L-tryptophan from chorismate: step 5/5. Its function is as follows. The alpha subunit is responsible for the aldol cleavage of indoleglycerol phosphate to indole and glyceraldehyde 3-phosphate. This is Tryptophan synthase alpha chain from Neisseria gonorrhoeae (strain ATCC 700825 / FA 1090).